A 236-amino-acid polypeptide reads, in one-letter code: Small ribosomal subunit protein uS3c (236 aa).

Residues 47–127 form the KH type-2 domain; that stretch reads VRKYVRSSSR…KLNMTLSQVA (81 aa).

It belongs to the universal ribosomal protein uS3 family. In terms of assembly, part of the 30S ribosomal subunit.

Its subcellular location is the plastid. The protein localises to the chloroplast. The protein is Small ribosomal subunit protein uS3c (rps3) of Zygnema circumcarinatum (Green alga).